Consider the following 629-residue polypeptide: Smc-like protein Sph1 (629 aa).

2 coiled-coil regions span residues 139–282 and 318–487; these read LETE…LLDD and AETT…NQFD.

The protein belongs to the Sph1/Sph2 family.

Its subcellular location is the cytoplasm. In terms of biological role, may play a role in a late step of replication. The sequence is that of Smc-like protein Sph1 (sph1) from Halobacterium salinarum (strain ATCC 29341 / DSM 671 / R1).